Reading from the N-terminus, the 174-residue chain is Large ribosomal subunit protein uL22 (174 aa).

The protein belongs to the universal ribosomal protein uL22 family. Part of the 50S ribosomal subunit.

Its function is as follows. This protein binds specifically to 23S rRNA. It makes multiple contacts with different domains of the 23S rRNA in the assembled 50S subunit and ribosome. Functionally, the globular domain of the protein is located near the polypeptide exit tunnel on the outside of the subunit, while an extended beta-hairpin is found that lines the wall of the exit tunnel in the center of the 70S ribosome. This Nanoarchaeum equitans (strain Kin4-M) protein is Large ribosomal subunit protein uL22.